Reading from the N-terminus, the 112-residue chain is uncharacterized protein (112 aa).

A signal peptide spans 1–29 (MINLHRLCIIHVVATLLSTLLSLISVAIS). The N-linked (GlcNAc...) asparagine glycan is linked to N84. Residues 84-112 (NLSKGYNQRPEGSKEESHMVVKEKRKGDH) are disordered. Over residues 94-112 (EGSKEESHMVVKEKRKGDH) the composition is skewed to basic and acidic residues.

Its subcellular location is the secreted. This is an uncharacterized protein from Homo sapiens (Human).